We begin with the raw amino-acid sequence, 339 residues long: DNA-directed RNA polymerase subunit alpha (339 aa).

The interval 1-233 is alpha N-terminal domain (alpha-NTD); that stretch reads MVREEVAGST…DLFLPFLHAE (233 aa). Positions 264–339 are alpha C-terminal domain (alpha-CTD); that stretch reads KKGIPLNCIF…IDLLKNKLSF (76 aa).

Belongs to the RNA polymerase alpha chain family. In terms of assembly, in plastids the minimal PEP RNA polymerase catalytic core is composed of four subunits: alpha, beta, beta', and beta''. When a (nuclear-encoded) sigma factor is associated with the core the holoenzyme is formed, which can initiate transcription.

Its subcellular location is the plastid. The protein resides in the chloroplast. The catalysed reaction is RNA(n) + a ribonucleoside 5'-triphosphate = RNA(n+1) + diphosphate. In terms of biological role, DNA-dependent RNA polymerase catalyzes the transcription of DNA into RNA using the four ribonucleoside triphosphates as substrates. In Heteranthelium piliferum (Elymus pilifer), this protein is DNA-directed RNA polymerase subunit alpha.